A 257-amino-acid polypeptide reads, in one-letter code: MIQIDALPAFNDNYIWLLQDPISRRCAVVDPGDAAPVLAWLEAHGDWTLSDILITHHHFDHVGGVEQLKKATGARVAGPAAEKIPARDVDLGDNDLIEVLGLRFQIMAVPGHTLGHIAYYHAEQNLLLCGDTLFAGGCGRLFEGTPQQMHQSLSRLAALPGATRVYCTHEYTLSNLRFAHAVEPHNPDVSARLAEVSRWRDEGRISLPSSIELELATNPFLRTGEPGVIKAAKRNDERSSSEPSAVFASLRAWKDRF.

Zn(2+)-binding residues include histidine 56, histidine 58, aspartate 60, histidine 61, histidine 112, aspartate 131, and histidine 169.

The protein belongs to the metallo-beta-lactamase superfamily. Glyoxalase II family. In terms of assembly, monomer. The cofactor is Zn(2+).

The enzyme catalyses an S-(2-hydroxyacyl)glutathione + H2O = a 2-hydroxy carboxylate + glutathione + H(+). It functions in the pathway secondary metabolite metabolism; methylglyoxal degradation; (R)-lactate from methylglyoxal: step 2/2. Its function is as follows. Thiolesterase that catalyzes the hydrolysis of S-D-lactoyl-glutathione to form glutathione and D-lactic acid. The protein is Hydroxyacylglutathione hydrolase of Ectopseudomonas mendocina (strain ymp) (Pseudomonas mendocina).